The sequence spans 345 residues: uncharacterized protein (345 aa).

Belongs to the proline racemase family.

This is an uncharacterized protein from Bacillus anthracis.